The primary structure comprises 214 residues: Small ribosomal subunit protein uS4c (214 aa).

Composition is skewed to basic residues over residues 1–14 and 36–46; these read MSRYRGPRVKKIKR and LSRPKPKKKSQ. A disordered region spans residues 1–46; that stretch reads MSRYRGPRVKKIKRLGSLPGLTTKKPPIVVRDPRKLSRPKPKKKSQ. The S4 RNA-binding domain occupies 92–153; it reads MRLDNTLFRL…KEKSKALIQN (62 aa).

The protein belongs to the universal ribosomal protein uS4 family. As to quaternary structure, part of the 30S ribosomal subunit. Contacts protein S5. The interaction surface between S4 and S5 is involved in control of translational fidelity.

The protein localises to the plastid. It is found in the chloroplast. In terms of biological role, one of the primary rRNA binding proteins, it binds directly to 16S rRNA where it nucleates assembly of the body of the 30S subunit. Its function is as follows. With S5 and S12 plays an important role in translational accuracy. This chain is Small ribosomal subunit protein uS4c (rps4), found in Pelargonium hortorum (Common geranium).